An 899-amino-acid chain; its full sequence is Toll-like receptor 4 (899 aa).

Residues 1–46 (MCPLQIHVLHLIQGNQKNRKGKYVNMTRQLWYILPLLFLLCHCVTS) form the signal peptide. N-linked (GlcNAc...) asparagine glycans are attached at residues Asn25, Asn75, Asn83, and Asn93. Residues 47–702 (ERRCYFSKIS…LERNCRSYTA (656 aa)) are Extracellular-facing. 7 LRR repeats span residues 83–103 (NESV…PDLP), 104–126 (RSLL…AFAR), 128–150 (QNLT…LTAG), 155–179 (LTRL…VLSD), 181–202 (VSLN…MRKI), 203–229 (HALK…YFQN), and 230–253 (VHGI…TFSY). 4 N-linked (GlcNAc...) asparagine glycosylation sites follow: Asn129, Asn137, Asn146, and Asn168. 4 N-linked (GlcNAc...) asparagine glycosylation sites follow: Asn237, Asn256, Asn275, and Asn313. LRR repeat units lie at residues 257 to 282 (LTHL…DLKN), 313 to 336 (NTSL…VLMY), 338 to 360 (PKTL…ALET), and 363 to 386 (LVNL…IFSN). N-linked (GlcNAc...) asparagine glycosylation is found at Asn388, Asn432, and Asn463. LRR repeat units lie at residues 468–493 (HYPL…VFYD), 501–524 (LEGL…FFDY), 526–549 (TGLK…EKGE), 554–577 (LLKL…ILRN), 579–601 (ISLE…LKHI), 602–624 (KGLR…VMRE), and 631–654 (SSNL…HFLR). Asn516 is a glycosylation site (N-linked (GlcNAc...) asparagine). N-linked (GlcNAc...) asparagine glycans are attached at residues Asn633, Asn637, and Asn668. A helical transmembrane segment spans residues 703–723 (VIVLFSCVFVILLTVIVCGVV). Residues 724–899 (YRYRWKLRYL…WRKLRDPISM (176 aa)) are Cytoplasmic-facing. The TIR domain occupies 756–897 (YEFDAFISYA…IFWRKLRDPI (142 aa)).

It belongs to the Toll-like receptor family. Expressed in all tissues tested. The highest expression is in the hepatopancreas, with moderate expression in the gills, and low expression in the gonads, adductor muscle, hemocytes, and mantle.

The protein localises to the cell membrane. Functionally, may be involved in the innate immune response. This Pinctada imbricata (Atlantic pearl-oyster) protein is Toll-like receptor 4.